A 456-amino-acid chain; its full sequence is Trigger factor (456 aa).

The PPIase FKBP-type domain maps to 192–277 (GDTVVIDFVG…IHEVKTKEVP (86 aa)).

It belongs to the FKBP-type PPIase family. Tig subfamily.

It is found in the cytoplasm. The catalysed reaction is [protein]-peptidylproline (omega=180) = [protein]-peptidylproline (omega=0). Its function is as follows. Involved in protein export. Acts as a chaperone by maintaining the newly synthesized protein in an open conformation. Functions as a peptidyl-prolyl cis-trans isomerase. The protein is Trigger factor of Streptococcus pyogenes serotype M12 (strain MGAS9429).